The following is a 402-amino-acid chain: N-acetyltransferase Eis (402 aa).

The region spanning V3–P154 is the N-acetyltransferase domain. Residues V85–V87, R93–R98, and S121–E122 each bind acetyl-CoA. Y126 serves as the catalytic Proton donor. The Proton acceptor; via carboxylate role is filled by F402.

This sequence belongs to the acetyltransferase Eis family. Homohexamer; trimer of dimers.

The protein resides in the secreted. It is found in the host cytoplasmic vesicle. It localises to the host phagosome. Its subcellular location is the extracellular vesicle. The protein localises to the bacterial extracellular vesicle. The protein resides in the host extracellular space. The enzyme catalyses L-lysyl-[protein] + acetyl-CoA = N(6)-acetyl-L-lysyl-[protein] + CoA + H(+). Effector that is released into the host cell and affects host immune responses. Acts as an acetyltransferase that acetylates lysine residues of host proteins. This chain is N-acetyltransferase Eis, found in Mycobacterium bovis (strain BCG / Pasteur 1173P2).